The following is a 624-amino-acid chain: Phosphomethylpyrimidine synthase (624 aa).

The segment at 40–61 is disordered; it reads VPMRKISQSDTPTNTGREKNPP. The segment covering 45–54 has biased composition (polar residues); that stretch reads ISQSDTPTNT. Substrate contacts are provided by residues N229, M258, Y287, H323, 343 to 345, 384 to 387, and E423; these read SRG and DGLR. H427 serves as a coordination point for Zn(2+). Residue Y450 participates in substrate binding. H491 contributes to the Zn(2+) binding site. Residues C571, C574, and C579 each coordinate [4Fe-4S] cluster.

This sequence belongs to the ThiC family. In terms of assembly, homodimer. Requires [4Fe-4S] cluster as cofactor.

The catalysed reaction is 5-amino-1-(5-phospho-beta-D-ribosyl)imidazole + S-adenosyl-L-methionine = 4-amino-2-methyl-5-(phosphooxymethyl)pyrimidine + CO + 5'-deoxyadenosine + formate + L-methionine + 3 H(+). It functions in the pathway cofactor biosynthesis; thiamine diphosphate biosynthesis. Catalyzes the synthesis of the hydroxymethylpyrimidine phosphate (HMP-P) moiety of thiamine from aminoimidazole ribotide (AIR) in a radical S-adenosyl-L-methionine (SAM)-dependent reaction. The sequence is that of Phosphomethylpyrimidine synthase from Methylococcus capsulatus (strain ATCC 33009 / NCIMB 11132 / Bath).